The chain runs to 113 residues: uncharacterized protein (113 aa).

The protein resides in the mitochondrion. This is an uncharacterized protein from Paramecium tetraurelia.